The chain runs to 492 residues: Protein nucleotidyltransferase YdiU (492 aa).

Residues Gly88, Gly90, Arg91, Lys111, Asp123, Gly124, Arg174, and Arg181 each coordinate ATP. Asp250 acts as the Proton acceptor in catalysis. 2 residues coordinate Mg(2+): Asn251 and Asp260. ATP is bound at residue Asp260.

Belongs to the SELO family. Mg(2+) serves as cofactor. Requires Mn(2+) as cofactor.

The enzyme catalyses L-seryl-[protein] + ATP = 3-O-(5'-adenylyl)-L-seryl-[protein] + diphosphate. The catalysed reaction is L-threonyl-[protein] + ATP = 3-O-(5'-adenylyl)-L-threonyl-[protein] + diphosphate. It catalyses the reaction L-tyrosyl-[protein] + ATP = O-(5'-adenylyl)-L-tyrosyl-[protein] + diphosphate. It carries out the reaction L-histidyl-[protein] + UTP = N(tele)-(5'-uridylyl)-L-histidyl-[protein] + diphosphate. The enzyme catalyses L-seryl-[protein] + UTP = O-(5'-uridylyl)-L-seryl-[protein] + diphosphate. The catalysed reaction is L-tyrosyl-[protein] + UTP = O-(5'-uridylyl)-L-tyrosyl-[protein] + diphosphate. Functionally, nucleotidyltransferase involved in the post-translational modification of proteins. It can catalyze the addition of adenosine monophosphate (AMP) or uridine monophosphate (UMP) to a protein, resulting in modifications known as AMPylation and UMPylation. The protein is Protein nucleotidyltransferase YdiU of Rhodopseudomonas palustris (strain TIE-1).